The primary structure comprises 216 residues: Ras-related protein YPTC6 (216 aa).

19 to 26 (GDSGVGKS) lines the GTP pocket. Positions 41 to 49 (SKSTIGVEF) match the Effector region motif. GTP is bound by residues 67–71 (DTAGQ) and 125–128 (NKSD). S-geranylgeranyl cysteine attachment occurs at residues Cys-214 and Cys-215.

It belongs to the small GTPase superfamily. Rab family.

The protein localises to the cell membrane. In Chlamydomonas reinhardtii (Chlamydomonas smithii), this protein is Ras-related protein YPTC6 (YPTC6).